We begin with the raw amino-acid sequence, 217 residues long: Kunitz-type trypsin inhibitor-like 1 protein (217 aa).

Positions 1–26 (MKPLSPLTLSFFLFVFITNLSLAFSN) are cleaved as a signal peptide. 2 disulfide bridges follow: cysteine 70-cysteine 115 and cysteine 168-cysteine 175. Asparagine 191 carries N-linked (GlcNAc...) asparagine glycosylation.

The protein belongs to the protease inhibitor I3 (leguminous Kunitz-type inhibitor) family. As to expression, expressed in roots, leaves, epidermal layers of elongating stems, meristems and in the vascular system.

It localises to the secreted. In terms of biological role, might act as a protease inhibitor involved in plant defense responses. This Pisum sativum (Garden pea) protein is Kunitz-type trypsin inhibitor-like 1 protein (PIP20-1).